Reading from the N-terminus, the 487-residue chain is Glutamyl-tRNA(Gln) amidotransferase subunit A (487 aa).

Catalysis depends on charge relay system residues Lys77 and Ser152. The active-site Acyl-ester intermediate is the Ser176.

The protein belongs to the amidase family. GatA subfamily. As to quaternary structure, heterotrimer of A, B and C subunits.

It catalyses the reaction L-glutamyl-tRNA(Gln) + L-glutamine + ATP + H2O = L-glutaminyl-tRNA(Gln) + L-glutamate + ADP + phosphate + H(+). Its function is as follows. Allows the formation of correctly charged Gln-tRNA(Gln) through the transamidation of misacylated Glu-tRNA(Gln) in organisms which lack glutaminyl-tRNA synthetase. The reaction takes place in the presence of glutamine and ATP through an activated gamma-phospho-Glu-tRNA(Gln). This chain is Glutamyl-tRNA(Gln) amidotransferase subunit A, found in Lysinibacillus sphaericus (strain C3-41).